The chain runs to 1040 residues: Multidrug resistance protein MdtB (1040 aa).

The next 12 helical transmembrane spans lie at 25 to 45 (LLMA…PVAA), 347 to 367 (LMLA…NIPA), 369 to 389 (IIPG…MVFL), 396 to 416 (LTLM…IVVI), 440 to 460 (IGFT…PLLF), 472 to 492 (FAVT…TLTP), 537 to 557 (WLTL…WIVI), 863 to 883 (LGST…VLGV), 888 to 908 (FIHP…ALLA), 910 to 930 (IIAG…LIGI), 968 to 988 (ILMT…STGV), and 998 to 1018 (IAMV…TPVI).

It belongs to the resistance-nodulation-cell division (RND) (TC 2.A.6) family. MdtB subfamily. In terms of assembly, part of a tripartite efflux system composed of MdtA, MdtB and MdtC. MdtB forms a heteromultimer with MdtC.

The protein resides in the cell inner membrane. The chain is Multidrug resistance protein MdtB from Salmonella schwarzengrund (strain CVM19633).